A 465-amino-acid chain; its full sequence is Branched-chain amino acid permease BcaP (465 aa).

13 helical membrane passes run 35-55 (LLGIGAIIGTGIFVLTGTGAV), 57-77 (AGPGLTISFVVAALACLFAAL), 103-123 (LMAFIIGWDLILEYMLAVSAV), 133-153 (SFLSGLGIHLPVALTAAPGAV), 159-179 (LFNLPAFVIVMAITYLLYLGI), 188-208 (IMVILKILVVLLFIAVAAVYV), 216-236 (FMPMGFGGVFSAAALVFFAFI), 258-278 (GIIFSLLVCTILYVTVSAIMT), 305-325 (VAGIIDIGAVLGMTTVMLVML), 355-375 (PYVATWFFGTMSALLGSLVPL), 380-400 (KLVNIGTLSAFVLISVAVIVL), 413-432 (CPGVPVIPGLAILFCLFLIL), and 437-456 (VTIVRFLVWLLIGLVIYFLY).

The protein belongs to the amino acid-polyamine-organocation (APC) superfamily.

The protein localises to the cell membrane. Isoleucine uptake is efficiently reduced in the presence of 100-fold excess valine, leucine, alanine, threonine, serine, cysteine, asparagine, and a nonproteinaceous amino acid 4-azaleucine. Branched-chain amino acid transport system which is involved in the uptake of isoleucine, valine and probably leucine. Can also transport threonine, and is active as a minor serine permease. May be an amino acid permease of rather broad specificity, because several amino acids, albeit at 100-fold excess, are able to prevent isoleucine uptake. Probably does not transport methionine. Together with BraB and BrnQ, plays an important role in the activation of CodY, a branched-chain amino acid-responsive transcriptional regulator that controls the expression of several dozen transcription units in B.subtilis. This Bacillus subtilis (strain 168) protein is Branched-chain amino acid permease BcaP.